We begin with the raw amino-acid sequence, 598 residues long: Elongation factor 4 (598 aa).

A tr-type G domain is found at 4-185 (KNIRNFSIIA…TIIAKIPPPK (182 aa)). Residues 16–21 (DHGKST) and 132–135 (NKID) each bind GTP.

The protein belongs to the TRAFAC class translation factor GTPase superfamily. Classic translation factor GTPase family. LepA subfamily.

It is found in the cell membrane. The catalysed reaction is GTP + H2O = GDP + phosphate + H(+). In terms of biological role, required for accurate and efficient protein synthesis under certain stress conditions. May act as a fidelity factor of the translation reaction, by catalyzing a one-codon backward translocation of tRNAs on improperly translocated ribosomes. Back-translocation proceeds from a post-translocation (POST) complex to a pre-translocation (PRE) complex, thus giving elongation factor G a second chance to translocate the tRNAs correctly. Binds to ribosomes in a GTP-dependent manner. In Mycoplasma genitalium (strain ATCC 33530 / DSM 19775 / NCTC 10195 / G37) (Mycoplasmoides genitalium), this protein is Elongation factor 4.